The following is a 767-amino-acid chain: E3 ubiquitin-protein ligase pub1 (767 aa).

Positions 1–111 (MSNSAQSRRI…AIGGDEMLTR (111 aa)) constitute a C2 domain. Polar residues predominate over residues 138-158 (LQVPSSAASGARTQRTSITND). 2 disordered regions span residues 138–216 (LQVP…RRTD) and 252–306 (SASS…RPYF). T156 carries the phosphothreonine modification. Low complexity predominate over residues 159–176 (PQSSQSSSVSRNPASSRA). Position 178 is a phosphoserine (S178). T180 carries the post-translational modification Phosphothreonine. Positions 184–194 (APAASPASSEP) are enriched in low complexity. Residues 211–236 (WERRTDNLGRTYYVDHNTRSTTWIRP) form the WW 1 domain. Polar residues predominate over residues 257–286 (NVTEGVQPSSSNAARRTEASVLTSNATTAG). WW domains follow at residues 294–319 (WEQR…WVDP) and 351–376 (WEMR…WDDP). Residues 463 to 767 (FLLSHEMFNP…VEETIGFGQE (305 aa)) form the HECT domain. Residue C735 is the Glycyl thioester intermediate of the active site.

The protein localises to the membrane. It localises to the cytoplasm. It carries out the reaction S-ubiquitinyl-[E2 ubiquitin-conjugating enzyme]-L-cysteine + [acceptor protein]-L-lysine = [E2 ubiquitin-conjugating enzyme]-L-cysteine + N(6)-ubiquitinyl-[acceptor protein]-L-lysine.. Its pathway is protein modification; protein ubiquitination. Functionally, E3 ubiquitin-protein ligase which accepts ubiquitin from an E2 ubiquitin-conjugating enzyme in the form of a thioester and then directly transfers the ubiquitin to targeted substrates. Regulates ubiquitination of cdc25. The chain is E3 ubiquitin-protein ligase pub1 (pub1) from Schizosaccharomyces pombe (strain 972 / ATCC 24843) (Fission yeast).